A 267-amino-acid chain; its full sequence is MTKTKIMGILNVTPDSFSDGGKFNNVESAVTRVKAMMDEGADIIDVGGVSTRPGHEMITVEEELNRVLPVVEAIVGFDVKISVDTFRSEVAEACLKLGVDIINDQWAGLYDHRMFQVVAKYDAEIVLMHNGNGNRDEPVVEEMLTSLLAQAHQAKIAGIPSNKIWLDPGIGFAKTRNEEAEVMARLDELVATEYPVLLATSRKRFTKEMMGYDTTPVERDEVTAATTAYGIMKGVRAVRVHNVELNAKLAKGIDFLKENENARHNFS.

The region spanning 1–251 (MTKTKIMGIL…NVELNAKLAK (251 aa)) is the Pterin-binding domain. Mg(2+) is bound at residue asparagine 11. Residues threonine 51, aspartate 84, asparagine 103, aspartate 167, lysine 203, and 239–241 (RVH) each bind (7,8-dihydropterin-6-yl)methyl diphosphate.

The protein belongs to the DHPS family. In terms of assembly, homodimer. Mg(2+) is required as a cofactor.

The catalysed reaction is (7,8-dihydropterin-6-yl)methyl diphosphate + 4-aminobenzoate = 7,8-dihydropteroate + diphosphate. The protein operates within cofactor biosynthesis; tetrahydrofolate biosynthesis; 7,8-dihydrofolate from 2-amino-4-hydroxy-6-hydroxymethyl-7,8-dihydropteridine diphosphate and 4-aminobenzoate: step 1/2. Functionally, catalyzes the condensation of para-aminobenzoate (pABA) with 6-hydroxymethyl-7,8-dihydropterin diphosphate (DHPt-PP) to form 7,8-dihydropteroate (H2Pte), the immediate precursor of folate derivatives. This Staphylococcus aureus (strain MRSA252) protein is Dihydropteroate synthase (folP).